The sequence spans 328 residues: Ribosomal protein L11 methyltransferase (328 aa).

Thr153, Gly174, Asp196, and Asn263 together coordinate S-adenosyl-L-methionine.

This sequence belongs to the methyltransferase superfamily. PrmA family.

It is found in the cytoplasm. The enzyme catalyses L-lysyl-[protein] + 3 S-adenosyl-L-methionine = N(6),N(6),N(6)-trimethyl-L-lysyl-[protein] + 3 S-adenosyl-L-homocysteine + 3 H(+). Methylates ribosomal protein L11. This Chloroflexus aurantiacus (strain ATCC 29366 / DSM 635 / J-10-fl) protein is Ribosomal protein L11 methyltransferase.